Consider the following 110-residue polypeptide: Large ribosomal subunit protein uL22 (110 aa).

It belongs to the universal ribosomal protein uL22 family. In terms of assembly, part of the 50S ribosomal subunit.

This protein binds specifically to 23S rRNA; its binding is stimulated by other ribosomal proteins, e.g. L4, L17, and L20. It is important during the early stages of 50S assembly. It makes multiple contacts with different domains of the 23S rRNA in the assembled 50S subunit and ribosome. Its function is as follows. The globular domain of the protein is located near the polypeptide exit tunnel on the outside of the subunit, while an extended beta-hairpin is found that lines the wall of the exit tunnel in the center of the 70S ribosome. The polypeptide is Large ribosomal subunit protein uL22 (Pectobacterium atrosepticum (strain SCRI 1043 / ATCC BAA-672) (Erwinia carotovora subsp. atroseptica)).